The primary structure comprises 161 residues: MRRFIFMSLGLLVLAFSLSGIGANQNCPSGWFPHNISCYKLFTERKNWDQAQRTCMEEQENGQLASITDADTAVKLSNKLSGNWNFFDIWFGLSLSKTRGFWLWPDGSMVTFTNWGKGEPNNFWDMESCAALTAASGYLSWNDKNCGLLHYFICQTQSRGG.

Residues methionine 1–alanine 23 form the signal peptide. 3 cysteine pairs are disulfide-bonded: cysteine 27/cysteine 38, cysteine 55/cysteine 154, and cysteine 129/cysteine 146. The 122-residue stretch at histidine 34–glutamine 155 folds into the C-type lectin domain. An N-linked (GlcNAc...) asparagine glycan is attached at asparagine 35. Positions lysine 117 to glutamate 119 match the Mannose-binding motif. 3 residues coordinate Ca(2+): glutamate 127, asparagine 142, and aspartate 143.

Belongs to the true venom lectin family. Expressed by the venom gland.

It is found in the secreted. Mannose-binding lectin which recognizes specific carbohydrate structures and agglutinates a variety of animal cells by binding to cell-surface glycoproteins and glycolipids. May be a calcium-dependent lectin. The chain is C-type lectin lectoxin-Lio3 from Erythrolamprus poecilogyrus (Water snake).